A 226-amino-acid polypeptide reads, in one-letter code: Triosephosphate isomerase (226 aa).

Residue 13-15 coordinates substrate; sequence NFK. The Electrophile role is filled by histidine 97. Glutamate 145 (proton acceptor) is an active-site residue. Substrate is bound by residues isoleucine 150, glycine 185, and 206–207; that span reads AS.

The protein belongs to the triosephosphate isomerase family. In terms of assembly, homotetramer; dimer of dimers.

The protein resides in the cytoplasm. It catalyses the reaction D-glyceraldehyde 3-phosphate = dihydroxyacetone phosphate. It functions in the pathway carbohydrate biosynthesis; gluconeogenesis. It participates in carbohydrate degradation; glycolysis; D-glyceraldehyde 3-phosphate from glycerone phosphate: step 1/1. Involved in the gluconeogenesis. Catalyzes stereospecifically the conversion of dihydroxyacetone phosphate (DHAP) to D-glyceraldehyde-3-phosphate (G3P). This chain is Triosephosphate isomerase, found in Methanobacterium bryantii.